The chain runs to 210 residues: Thymidylate kinase (210 aa).

ATP is bound at residue G10–S17.

Belongs to the thymidylate kinase family.

It carries out the reaction dTMP + ATP = dTDP + ADP. Phosphorylation of dTMP to form dTDP in both de novo and salvage pathways of dTTP synthesis. In Haemophilus influenzae (strain ATCC 51907 / DSM 11121 / KW20 / Rd), this protein is Thymidylate kinase (tmk).